The chain runs to 333 residues: Terminal uridylyltransferase 4 (333 aa).

Residues S54 and 65 to 68 contribute to the UTP site; that span reads SDVD. D66 and D68 together coordinate Mg(2+). R121 provides a ligand contact to RNA. UTP contacts are provided by residues 144 to 148, K169, K173, and 188 to 189; these read GVRNS and SY. One can recognise a PAP-associated domain in the interval 237–302; sequence LGTQVLDFLH…WCIEDPYELN (66 aa).

It belongs to the DNA polymerase type-B-like family. As to quaternary structure, monomer. Requires Mg(2+) as cofactor. Mn(2+) serves as cofactor.

The enzyme catalyses RNA(n) + UTP = RNA(n)-3'-uridine ribonucleotide + diphosphate. With respect to regulation, the 3' uridylated RNA substrate is involved in the selective incorporation of UTP; UTP binding is favored due to the constraint posed on the positioning of the NTP base by the continuous stacking interactions between Tyr-189 side chain, the bound NTP, and the terminal nucleoside base of the RNA substrate. Its function is as follows. Terminal uridylyltransferase which, specifically, catalyzes the addition of Us to the 3'-hydroxyl group of single-stranded RNAs with a 3'-terminal U. This chain is Terminal uridylyltransferase 4, found in Trypanosoma brucei brucei (strain 927/4 GUTat10.1).